Here is a 252-residue protein sequence, read N- to C-terminus: Type IV pilus assembly protein PilF (252 aa).

The N-terminal stretch at 1–17 is a signal peptide; the sequence is MTVRAALVFLLAVGLTG. The N-palmitoyl cysteine moiety is linked to residue C18. C18 carries S-diacylglycerol cysteine lipidation. TPR repeat units follow at residues 32–67, 84–101, 104–133, 139–171, 174–203, and 208–235; these read GRDEARDAYIQLGLGYLQRGNTEQAKVPLRKALEID, EMEPKLADEEYRKALASD, NARVLNNYGGFLYEQKRYEEAYQRLLEASQ, ERSRVFENLGLVSLQMKKPAQAKEYFEKSLRLN, QPSVALEMADLLYKEREYVPARQYYDLFAQ, and NARSLLLGIRLAKVFEDRDTAASYGLQL.

In terms of assembly, interacts with PilQ; this interaction is essential for assemby of PilQ into secretins.

The protein localises to the cell outer membrane. Its function is as follows. Essential component of the type IV pilus (T4P) that plays a role in surface and host cell adhesion, colonization, biofilm maturation, virulence, and twitching, a form of surface-associated motility facilitated by cycles of extension, adhesion, and retraction of T4P fibers. Plays an essential role in the outer membrane localization and assembly of PilQ into secretins which are dodecamers of PilQ. The sequence is that of Type IV pilus assembly protein PilF (pilF) from Pseudomonas aeruginosa (strain ATCC 15692 / DSM 22644 / CIP 104116 / JCM 14847 / LMG 12228 / 1C / PRS 101 / PAO1).